The primary structure comprises 399 residues: Forkhead box protein Q1 (399 aa).

Positions 1–112 are disordered; the sequence is MKLEVFAPRA…EGARSKPYTR (112 aa). A compositionally biased stretch (low complexity) spans 32–54; it reads LSAAGDDSLGSDGDCAANSPAAG. Residues 55 to 66 are compositionally biased toward gly residues; sequence SGAGDLEGGGGE. Positions 114–205 form a DNA-binding region, fork-head; it reads PKPPYSYIAL…SEYTFADGVF (92 aa). Residues 211-263 form a disordered region; the sequence is RLSHRTTVSASGYGGGSPPGPAGTPQPAPTAGSSPIARSPARQEEGSSPASKF. The span at 228–238 shows a compositional bias: pro residues; it reads PPGPAGTPQPA.

It is found in the nucleus. Functionally, plays a role in hair follicle differentiation. The chain is Forkhead box protein Q1 (Foxq1) from Rattus norvegicus (Rat).